Reading from the N-terminus, the 349-residue chain is GDSL esterase/lipase At1g58725 (349 aa).

The N-terminal stretch at 1 to 19 is a signal peptide; that stretch reads MKIQILLFALVLIFVEANA. Asn-25 carries N-linked (GlcNAc...) asparagine glycosylation. The Nucleophile role is filled by Ser-37. Residue Asn-316 is glycosylated (N-linked (GlcNAc...) asparagine). Active-site residues include Asp-324 and His-327.

Belongs to the 'GDSL' lipolytic enzyme family.

It localises to the secreted. The sequence is that of GDSL esterase/lipase At1g58725 from Arabidopsis thaliana (Mouse-ear cress).